A 157-amino-acid chain; its full sequence is Serine-protein kinase RsbW (157 aa).

It belongs to the anti-sigma-factor family.

The enzyme catalyses L-seryl-[protein] + ATP = O-phospho-L-seryl-[protein] + ADP + H(+). It carries out the reaction L-threonyl-[protein] + ATP = O-phospho-L-threonyl-[protein] + ADP + H(+). Functionally, negative regulator of sigma-B activity. Phosphorylates and inactivates its specific antagonist protein, RsbV. Upon phosphorylation of RsbV, RsbW is released and binds to sigma-B, thereby blocking its ability to form an RNA polymerase holoenzyme (E-sigma-B). The sequence is that of Serine-protein kinase RsbW from Listeria innocua serovar 6a (strain ATCC BAA-680 / CLIP 11262).